The chain runs to 311 residues: Coproporphyrin III ferrochelatase 1 (311 aa).

Fe-coproporphyrin III contacts are provided by residues Tyr-12, Arg-29, 45-46, Ser-53, and Tyr-124; that span reads RY. His-182 and Glu-263 together coordinate Fe(2+).

It belongs to the ferrochelatase family.

The protein localises to the cytoplasm. The enzyme catalyses Fe-coproporphyrin III + 2 H(+) = coproporphyrin III + Fe(2+). It participates in porphyrin-containing compound metabolism; protoheme biosynthesis. Its function is as follows. Involved in coproporphyrin-dependent heme b biosynthesis. Catalyzes the insertion of ferrous iron into coproporphyrin III to form Fe-coproporphyrin III. The polypeptide is Coproporphyrin III ferrochelatase 1 (Bacillus cereus (strain ATCC 10987 / NRS 248)).